The primary structure comprises 396 residues: Probable splicing factor YJU2B (396 aa).

The tract at residues 1-26 (MGERKGVNKYYPPDFNPEKHGSLNRY) is disordered. Ser-40 carries the phosphoserine modification. A coiled-coil region spans residues 182–214 (LNSMLRRRFREKKKAIQEEEERDQALQAKASLT). The segment at 295–396 (IVRRRSRDVP…VADYSDSESE (102 aa)) is disordered. At Ser-306 the chain carries Phosphoserine. The segment covering 315–327 (KSGEPRVPEEAAQ) has biased composition (basic and acidic residues). Residues 340-350 (TTETPKCSSPR) are compositionally biased toward polar residues. Position 362 is a phosphoserine (Ser-362).

The protein belongs to the CWC16 family.

It is found in the nucleus. In terms of biological role, may be involved in mRNA splicing. This chain is Probable splicing factor YJU2B, found in Homo sapiens (Human).